The primary structure comprises 416 residues: D-amino acid dehydrogenase (416 aa).

3 to 17 (VVILGAGVIGVTSAW) contributes to the FAD binding site.

It belongs to the DadA oxidoreductase family. FAD serves as cofactor.

The catalysed reaction is a D-alpha-amino acid + A + H2O = a 2-oxocarboxylate + AH2 + NH4(+). It functions in the pathway amino-acid degradation; D-alanine degradation; NH(3) and pyruvate from D-alanine: step 1/1. Functionally, oxidative deamination of D-amino acids. The sequence is that of D-amino acid dehydrogenase from Rhizorhabdus wittichii (strain DSM 6014 / CCUG 31198 / JCM 15750 / NBRC 105917 / EY 4224 / RW1) (Sphingomonas wittichii).